The primary structure comprises 222 residues: 6,7-dimethyl-8-ribityllumazine synthase, chloroplastic (222 aa).

The transit peptide at 1 to 66 directs the protein to the chloroplast; the sequence is MASFAASQTC…NRASFVVTNA (66 aa). 5-amino-6-(D-ribitylamino)uracil contacts are provided by residues Phe-89, 122 to 124, and 146 to 148; these read AYE and AVV. 151-152 lines the (2S)-2-hydroxy-3-oxobutyl phosphate pocket; the sequence is DT. Residue His-154 is the Proton donor of the active site. Phe-179 contributes to the 5-amino-6-(D-ribitylamino)uracil binding site. Arg-193 lines the (2S)-2-hydroxy-3-oxobutyl phosphate pocket.

It belongs to the DMRL synthase family. As to quaternary structure, oligomer forming an icosahedral capsid.

The protein resides in the plastid. It is found in the chloroplast. It carries out the reaction (2S)-2-hydroxy-3-oxobutyl phosphate + 5-amino-6-(D-ribitylamino)uracil = 6,7-dimethyl-8-(1-D-ribityl)lumazine + phosphate + 2 H2O + H(+). Its pathway is cofactor biosynthesis; riboflavin biosynthesis; riboflavin from 2-hydroxy-3-oxobutyl phosphate and 5-amino-6-(D-ribitylamino)uracil: step 1/2. Functionally, catalyzes the formation of 6,7-dimethyl-8-ribityllumazine by condensation of 5-amino-6-(D-ribitylamino)uracil with 3,4-dihydroxy-2-butanone 4-phosphate. This is the penultimate step in the biosynthesis of riboflavin. The polypeptide is 6,7-dimethyl-8-ribityllumazine synthase, chloroplastic (Spinacia oleracea (Spinach)).